The primary structure comprises 344 residues: Ferrochelatase (344 aa).

2 residues coordinate Fe cation: histidine 214 and glutamate 295.

It belongs to the ferrochelatase family.

It is found in the cytoplasm. It catalyses the reaction heme b + 2 H(+) = protoporphyrin IX + Fe(2+). It functions in the pathway porphyrin-containing compound metabolism; protoheme biosynthesis; protoheme from protoporphyrin-IX: step 1/1. Catalyzes the ferrous insertion into protoporphyrin IX. The chain is Ferrochelatase from Rhizobium johnstonii (strain DSM 114642 / LMG 32736 / 3841) (Rhizobium leguminosarum bv. viciae).